A 147-amino-acid chain; its full sequence is Globin (147 aa).

Positions 2-147 (SFSAAQVDTV…SVANGIGQYQ (146 aa)) constitute a Globin domain. Heme b-binding residues include His64 and His95.

The protein belongs to the globin family. Homodimer or homooligomer.

The sequence is that of Globin from Aequiyoldia eightsii (Antarctic yoldia).